A 189-amino-acid chain; its full sequence is UPF0301 protein PA14_05290 (189 aa).

This sequence belongs to the UPF0301 (AlgH) family.

The polypeptide is UPF0301 protein PA14_05290 (Pseudomonas aeruginosa (strain UCBPP-PA14)).